Reading from the N-terminus, the 453-residue chain is Phenylalanine-4-hydroxylase (453 aa).

Ala2 is subject to N-acetylalanine. Ser16 carries the phosphoserine; by PKA modification. The ACT domain maps to 36–114 (SLIFSLKEEV…TVHELSRDKE (79 aa)). Residues His285, His290, and Glu330 each contribute to the Fe cation site.

It belongs to the biopterin-dependent aromatic amino acid hydroxylase family. In terms of assembly, homodimer and homotetramer. Fe(2+) serves as cofactor. In terms of processing, phosphorylation at Ser-16 increases basal activity and facilitates activation by the substrate phenylalanine.

The catalysed reaction is (6R)-L-erythro-5,6,7,8-tetrahydrobiopterin + L-phenylalanine + O2 = (4aS,6R)-4a-hydroxy-L-erythro-5,6,7,8-tetrahydrobiopterin + L-tyrosine. The protein operates within amino-acid degradation; L-phenylalanine degradation; acetoacetate and fumarate from L-phenylalanine: step 1/6. With respect to regulation, N-terminal region of PAH is thought to contain allosteric binding sites for phenylalanine and to constitute an 'inhibitory' domain that regulates the activity of a catalytic domain in the C-terminal portion of the molecule. Its function is as follows. Catalyzes the hydroxylation of L-phenylalanine to L-tyrosine. The sequence is that of Phenylalanine-4-hydroxylase (Pah) from Rattus norvegicus (Rat).